Reading from the N-terminus, the 307-residue chain is DNA damage tolerance protein rad31 (307 aa).

In terms of biological role, could be involved in a ubiquitin-related process important for DNA damage tolerance. Acts in a process which is defective in the checkpoint rad mutants and which involves hus5. This Schizosaccharomyces pombe (strain 972 / ATCC 24843) (Fission yeast) protein is DNA damage tolerance protein rad31 (rad31).